Consider the following 73-residue polypeptide: Omega-conotoxin GVIA (73 aa).

The signal sequence occupies residues 1–22; that stretch reads MKLTCVVIVAVLLLTACQLITA. Residues 23–45 constitute a propeptide that is removed on maturation; sequence DDSRGTQKHRALGSTTELSLSTR. Disulfide bonds link cysteine 46/cysteine 61, cysteine 53/cysteine 64, and cysteine 60/cysteine 71. 4-hydroxyproline occurs at positions 49, 55, and 66. The residue at position 72 (tyrosine 72) is a Tyrosine amide; in form omega-conotoxin GVIA.

It belongs to the conotoxin O1 superfamily. In terms of tissue distribution, expressed by the venom duct.

The protein resides in the secreted. In terms of biological role, omega-conotoxins act at presynaptic membranes, they bind and block voltage-gated calcium channels (Cav). This toxin blocks N-type calcium channels (Cav2.2/CACNA1B) with a high potency (it displaces [125I]GVIA with an IC(50)=3.7-38 pM). This is Omega-conotoxin GVIA from Conus geographus (Geography cone).